The chain runs to 87 residues: Long neurotoxin LlLong (87 aa).

The first 20 residues, 1–20, serve as a signal peptide directing secretion; sequence KTLLLTLVVVTIICLDFGYT. Disulfide bonds link Cys23–Cys41, Cys34–Cys62, Cys47–Cys51, Cys66–Cys77, and Cys78–Cys83.

Belongs to the three-finger toxin family. Long-chain subfamily. Type II alpha-neurotoxin sub-subfamily. As to expression, expressed by the venom gland.

It localises to the secreted. Binds with high affinity to muscular (alpha-1/CHRNA1) and neuronal (alpha-7/CHRNA7) nicotinic acetylcholine receptor (nAChR) and inhibits acetylcholine from binding to the receptor, thereby impairing neuromuscular and neuronal transmission. This chain is Long neurotoxin LlLong, found in Laticauda laticaudata (Blue-ringed sea krait).